The chain runs to 111 residues: Latartoxin-2b (111 aa).

Positions 1–19 (MKVLVIIALCFFILQTALS) are cleaved as a signal peptide. Positions 20–43 (EDKYESFESYVEDLKSGNMKGEAR) are cleaved as a propeptide — removed in mature form. The Processing quadruplet motif signature appears at 40 to 43 (GEAR). 5 cysteine pairs are disulfide-bonded: Cys-45-Cys-62, Cys-52-Cys-73, Cys-61-Cys-87, Cys-75-Cys-85, and Cys-78-Cys-99. Val-110 is modified (valine amide).

It belongs to the neurotoxin 19 (CSTX) family. 11 (latartoxin) subfamily. Contains 5 disulfide bonds. In terms of processing, cleavage of the propeptide depends on the processing quadruplet motif (XXXR, with at least one of X being E). In terms of tissue distribution, expressed by the venom gland.

Its subcellular location is the secreted. Its function is as follows. Insect toxin. The protein is Latartoxin-2b of Lachesana tarabaevi (Spider).